The chain runs to 292 residues: Small ribosomal subunit biogenesis GTPase RsgA (292 aa).

The CP-type G domain maps to 64 to 221 (RSELFRPAVA…LVDTPGFSSL (158 aa)). GTP contacts are provided by residues 113-116 (NKMD) and 164-172 (GPSGVGKST). The Zn(2+) site is built by cysteine 245, cysteine 250, histidine 252, and cysteine 258.

This sequence belongs to the TRAFAC class YlqF/YawG GTPase family. RsgA subfamily. As to quaternary structure, monomer. Associates with 30S ribosomal subunit, binds 16S rRNA. Zn(2+) is required as a cofactor.

The protein localises to the cytoplasm. Its function is as follows. One of several proteins that assist in the late maturation steps of the functional core of the 30S ribosomal subunit. Helps release RbfA from mature subunits. May play a role in the assembly of ribosomal proteins into the subunit. Circularly permuted GTPase that catalyzes slow GTP hydrolysis, GTPase activity is stimulated by the 30S ribosomal subunit. The chain is Small ribosomal subunit biogenesis GTPase RsgA from Clostridium botulinum (strain Okra / Type B1).